A 70-amino-acid chain; its full sequence is Flexible pilin (70 aa).

The first 24 residues, 1–24 (MPNFFRNGCIALVGSVAAMGAAHA), serve as a signal peptide directing secretion.

As to quaternary structure, homomer.

Its subcellular location is the fimbrium. Its function is as follows. Fimbriae (also called pili) are polar filaments radiating from the surface of the bacterium to a length of 0.5-1.5 micrometers and numbering 100-300 per cell. They enable bacteria to colonize the epithelium of specific host organs. Flexible pili possess hemagglutinating function. The sequence is that of Flexible pilin (aerA) from Aeromonas hydrophila.